Here is a 255-residue protein sequence, read N- to C-terminus: Tritrans,polycis-undecaprenyl-diphosphate synthase (geranylgeranyl-diphosphate specific) (255 aa).

Residue Asp-34 is part of the active site. Asp-34 contacts Mg(2+). Residues Gly-35–Arg-38, His-51, and Ser-79–Glu-81 contribute to the substrate site. Asn-82 acts as the Proton acceptor in catalysis. Residues Phe-83, Arg-85, Arg-204, and Arg-210–Ser-212 each bind substrate. Glu-223 is a Mg(2+) binding site.

The protein belongs to the UPP synthase family. As to quaternary structure, homodimer. Mg(2+) serves as cofactor.

The catalysed reaction is geranylgeranyl diphosphate + 7 isopentenyl diphosphate = tri-trans,hepta-cis-undecaprenyl diphosphate + 7 diphosphate. Its function is as follows. Catalyzes the sequential condensation of isopentenyl diphosphate (IPP) with geranylgeranyl diphosphate (GGPP) to yield (2Z,6Z,10Z,14Z,18Z,22Z,26Z,30E,34E,38E)-undecaprenyl diphosphate (tritrans,heptacis-UPP). It is probably the precursor of glycosyl carrier lipids. The polypeptide is Tritrans,polycis-undecaprenyl-diphosphate synthase (geranylgeranyl-diphosphate specific) (Picrophilus torridus (strain ATCC 700027 / DSM 9790 / JCM 10055 / NBRC 100828 / KAW 2/3)).